Consider the following 255-residue polypeptide: 1-(5-phosphoribosyl)-5-[(5-phosphoribosylamino)methylideneamino] imidazole-4-carboxamide isomerase (255 aa).

The active-site Proton acceptor is D8. The Proton donor role is filled by D129.

The protein belongs to the HisA/HisF family.

Its subcellular location is the cytoplasm. The catalysed reaction is 1-(5-phospho-beta-D-ribosyl)-5-[(5-phospho-beta-D-ribosylamino)methylideneamino]imidazole-4-carboxamide = 5-[(5-phospho-1-deoxy-D-ribulos-1-ylimino)methylamino]-1-(5-phospho-beta-D-ribosyl)imidazole-4-carboxamide. It participates in amino-acid biosynthesis; L-histidine biosynthesis; L-histidine from 5-phospho-alpha-D-ribose 1-diphosphate: step 4/9. The polypeptide is 1-(5-phosphoribosyl)-5-[(5-phosphoribosylamino)methylideneamino] imidazole-4-carboxamide isomerase (Prochlorococcus marinus (strain MIT 9303)).